We begin with the raw amino-acid sequence, 126 residues long: Aspartate 1-decarboxylase (126 aa).

Catalysis depends on S25, which acts as the Schiff-base intermediate with substrate; via pyruvic acid. S25 is modified (pyruvic acid (Ser)). Position 57 (T57) interacts with substrate. Residue Y58 is the Proton donor of the active site. 73–75 (GAA) contacts substrate.

This sequence belongs to the PanD family. As to quaternary structure, heterooctamer of four alpha and four beta subunits. Requires pyruvate as cofactor. Is synthesized initially as an inactive proenzyme, which is activated by self-cleavage at a specific serine bond to produce a beta-subunit with a hydroxyl group at its C-terminus and an alpha-subunit with a pyruvoyl group at its N-terminus.

It localises to the cytoplasm. The enzyme catalyses L-aspartate + H(+) = beta-alanine + CO2. Its pathway is cofactor biosynthesis; (R)-pantothenate biosynthesis; beta-alanine from L-aspartate: step 1/1. Catalyzes the pyruvoyl-dependent decarboxylation of aspartate to produce beta-alanine. In Proteus mirabilis (strain HI4320), this protein is Aspartate 1-decarboxylase.